Consider the following 142-residue polypeptide: Large ribosomal subunit protein uL11 (142 aa).

This sequence belongs to the universal ribosomal protein uL11 family. In terms of assembly, part of the ribosomal stalk of the 50S ribosomal subunit. Interacts with L10 and the large rRNA to form the base of the stalk. L10 forms an elongated spine to which L12 dimers bind in a sequential fashion forming a multimeric L10(L12)X complex. One or more lysine residues are methylated.

Forms part of the ribosomal stalk which helps the ribosome interact with GTP-bound translation factors. In Pelotomaculum thermopropionicum (strain DSM 13744 / JCM 10971 / SI), this protein is Large ribosomal subunit protein uL11.